The sequence spans 707 residues: Choline transporter-like protein 4 (707 aa).

At 1 to 32 (MGKKQKENEAYGNSAKYDPSFRGPIKNRGCTD) the chain is on the cytoplasmic side. A helical membrane pass occupies residues 33-53 (IICCVLFLVFILGYIVVGLVA). Residues 54-227 (WVYGDPRQVL…KIFEDFAQSW (174 aa)) lie on the Extracellular side of the membrane. 4 N-linked (GlcNAc...) asparagine glycosylation sites follow: N67, N185, N195, and N196. Residues 228-248 (YWILVALGVALVLSLLFILLL) form a helical membrane-spanning segment. Topologically, residues 249–250 (RL) are cytoplasmic. Residues 251–271 (VAAPLVLLLIVGVLAVLAYGI) form a helical membrane-spanning segment. Residues 272 to 307 (YHCWQQYRELRDQGVSITQLGFTANLSAYQNVKETW) lie on the Extracellular side of the membrane. Residue N296 is glycosylated (N-linked (GlcNAc...) asparagine). Residues 308 to 328 (LAALIILAVLEGVLLLMLIFL) traverse the membrane as a helical segment. The Cytoplasmic segment spans residues 329–356 (RQRIRIAIALLKEASRAVGQMMSTMFYP). Residues 357–377 (LVTFVLLVICIGYWAVTALYL) form a helical membrane-spanning segment. Residues 378–452 (ATSGQPQYVY…GILGLFWTVN (75 aa)) lie on the Extracellular side of the membrane. N-linked (GlcNAc...) asparagine glycans are attached at residues N391, N403, and N413. A helical membrane pass occupies residues 453-473 (WVLALGQCVLAGAFASFYWAF). Residues 474 to 498 (HKPRDIPTFPLSSAFIRTLRYHTGS) lie on the Cytoplasmic side of the membrane. A helical transmembrane segment spans residues 499–519 (LAFGALILTLVQIARVILEYI). At 520–557 (DHKLRGSQNPVARCIICCFKCCLWCLEKFIKFLNRNAY) the chain is on the extracellular side. Residues 558 to 578 (IMIAIYGKNFCVSAKNAFMLL) traverse the membrane as a helical segment. The Cytoplasmic portion of the chain corresponds to 579 to 594 (MRNVVRVVVLDKVTDL). The chain crosses the membrane as a helical span at residues 595–615 (LLFFGKLLVVGGVGVLSFFFF). The Extracellular segment spans residues 616-635 (SGRIKGLGKDFKNPDLNYYW). Residues 636 to 656 (LPIMTSIMGAYVIASGFFSVF) traverse the membrane as a helical segment. Residues 657–707 (GMCVDTLFLCFLEDLERNDGSQERPYYMPKALLKILGKKNEVPTGGKNRKK) are Cytoplasmic-facing.

The protein belongs to the CTL (choline transporter-like) family. Post-translationally, N-glycosylated; N-glycosylation of Asn-67 and Asn-391 is required for a proper thiamine pyrophosphate uptake. Highly expressed in intestine, kidney and stomach. Also expressed in testis and lung.

It localises to the membrane. The protein resides in the apical cell membrane. The enzyme catalyses choline(out) + n H(+)(in) = choline(in) + n H(+)(out). It carries out the reaction thiamine diphosphate(out) = thiamine diphosphate(in). Its function is as follows. Choline transporter that plays a role in the choline-acetylcholine system and is required to the efferent innervation of hair cells in the olivocochlear bundle for the maintenance of physiological function of outer hair cells and the protection of hair cells from acoustic injury. Also described as a thiamine pyrophosphate transporter in colon, may mediate the absorption of microbiota-generated thiamine pyrophosphate and contribute to host thiamine (vitamin B1) homeostasis. This chain is Choline transporter-like protein 4, found in Rattus norvegicus (Rat).